The primary structure comprises 676 residues: DNA ligase (676 aa).

NAD(+) contacts are provided by residues 39–43 (DYVYD), 88–91 (SLND), and E118. K120 (N6-AMP-lysine intermediate) is an active-site residue. Positions 141, 175, 291, and 315 each coordinate NAD(+). C409, C412, C427, and C432 together coordinate Zn(2+). Residues 595–676 (EVESPFKDKT…MVDALDASHF (82 aa)) form the BRCT domain.

This sequence belongs to the NAD-dependent DNA ligase family. LigA subfamily. Mg(2+) serves as cofactor. Mn(2+) is required as a cofactor.

The enzyme catalyses NAD(+) + (deoxyribonucleotide)n-3'-hydroxyl + 5'-phospho-(deoxyribonucleotide)m = (deoxyribonucleotide)n+m + AMP + beta-nicotinamide D-nucleotide.. DNA ligase that catalyzes the formation of phosphodiester linkages between 5'-phosphoryl and 3'-hydroxyl groups in double-stranded DNA using NAD as a coenzyme and as the energy source for the reaction. It is essential for DNA replication and repair of damaged DNA. The polypeptide is DNA ligase (Enterococcus faecalis (strain ATCC 700802 / V583)).